A 66-amino-acid chain; its full sequence is Beta-defensin 107A (66 aa).

An N-terminal signal peptide occupies residues Met1–Thr22. Disulfide bonds link Cys37/Cys51 and Cys41/Cys60.

Belongs to the beta-defensin family.

It localises to the secreted. Its function is as follows. Has antibacterial activity. This Hylobates lar (Lar gibbon) protein is Beta-defensin 107A (DEFB107A).